A 286-amino-acid polypeptide reads, in one-letter code: MSDIEEGTPTNNGQQKERRKIEIKFIENKTRRHVTFSKRKHGIMKKAFELSVLTGTQVLLLVVSETGLVYTFSTPKFEPIVTQQEGRNLIQACLNAPDDEEEDEEEDGDDDDDDDDDGNDMQRQQPQQQQPQQQQQVLNAHANSLGHLNQDQVPAGALKQEVKSQLLGGANPNQNSMIQQQQHHTQNSQPQQQQQQQPQQQMSQQQMSQHPRPQQGIPHPQQSQPQQQQQQQQQLQQQQQQQQQQPLTGIHQPHQQAFANAASPYLNAEQNAAYQQYFQEPQQGQY.

Ser-2 bears the N-acetylserine mark. The residue at position 2 (Ser-2) is a Phosphoserine. An MADS-box domain is found at 18–72 (RRKIEIKFIENKTRRHVTFSKRKHGIMKKAFELSVLTGTQVLLLVVSETGLVYTF). The segment covering 97 to 119 (PDDEEEDEEEDGDDDDDDDDDGN) has biased composition (acidic residues). Residues 97 to 137 (PDDEEEDEEEDGDDDDDDDDDGNDMQRQQPQQQQPQQQQQV) form a disordered region. Positions 122-136 (QRQQPQQQQPQQQQQ) are enriched in low complexity. Ser-144 carries the phosphoserine modification. The interval 167–264 (LGGANPNQNS…QQAFANAASP (98 aa)) is disordered. Over residues 171–246 (NPNQNSMIQQ…QQQQQQQQQP (76 aa)) the composition is skewed to low complexity.

Homodimer. Binds DNA with a high specificity in complex with mating-type protein ALPHA1. Also binds DNA with a high specificity as a heterotetramer consisting of an ALPHA2 dimer and an MCM1 dimer. Interacts with YHP1 and YOX1, possibly leading to its inactivation. Interacts with ARG80 and ARG82.

It is found in the nucleus. Its function is as follows. Transcription factor required for the efficient replication of minichromosomes and the transcriptional regulation of early cell cycle genes. Activates transcription of ECB-dependent genes during the G1/M phase. Genes that contain a ECB (early cell box) element in their transcription regulatory region are transcribed only during G1/M phases. Interacts with the alpha-2 repressor or with the alpha-1 activator thereby regulating the expression of mating-type-specific genes. With ARG80, ARG81 and ARG82, coordinates the expression of arginine anabolic and catabolic genes in response to arginine. This is Pheromone receptor transcription factor (MCM1) from Saccharomyces cerevisiae (strain ATCC 204508 / S288c) (Baker's yeast).